The following is a 511-amino-acid chain: MKKRALVSVSDKTGVVEFVKGLLEQGIEVISTGGTKKLLEENGLQVIGISEVTGFPEIMDGRVKTLHPNIHGGLLAVRDNETHVTQMNELGMEPIDFVVVNLYPFKETIAKPDVTFADAIENIDIGGPTMIRSAAKNHKFVSVIVDPVDYDIVLAELKENGEVAEETKRKLAAKVFRHTAAYDALISNYLTEQMGEESPETLTVTFEKKQDLRYGENPHQKATFYKAPFAATSSVAYAEQLHGKELSYNNINDADAALSIVKEFTEPAVVAVKHMNPCGVGVGTDIHEAYTRAYEADPVSIFGGIIAANREIDKATAEKLHEIFLEIVIAPSFSQEALEVLQSKKNLRLLTINIEKATSASKKLTSVQGGLLVQEEDTLSLDESTISIPTKREPSEQEWKDLKLAWKVVKHVKSNAIVLAKDDMTIGVGAGQMNRVGSAKIAITQAGEKAQGSALASDAFFPMPDTLEEAAKAGITAIIQPGGSIRDEDSIKVADTYGIAMVFTGVRHFKH.

Residues 1–145 form the MGS-like domain; the sequence is MKKRALVSVS…KNHKFVSVIV (145 aa).

It belongs to the PurH family.

The enzyme catalyses (6R)-10-formyltetrahydrofolate + 5-amino-1-(5-phospho-beta-D-ribosyl)imidazole-4-carboxamide = 5-formamido-1-(5-phospho-D-ribosyl)imidazole-4-carboxamide + (6S)-5,6,7,8-tetrahydrofolate. It catalyses the reaction IMP + H2O = 5-formamido-1-(5-phospho-D-ribosyl)imidazole-4-carboxamide. The protein operates within purine metabolism; IMP biosynthesis via de novo pathway; 5-formamido-1-(5-phospho-D-ribosyl)imidazole-4-carboxamide from 5-amino-1-(5-phospho-D-ribosyl)imidazole-4-carboxamide (10-formyl THF route): step 1/1. It participates in purine metabolism; IMP biosynthesis via de novo pathway; IMP from 5-formamido-1-(5-phospho-D-ribosyl)imidazole-4-carboxamide: step 1/1. In Bacillus cereus (strain ATCC 14579 / DSM 31 / CCUG 7414 / JCM 2152 / NBRC 15305 / NCIMB 9373 / NCTC 2599 / NRRL B-3711), this protein is Bifunctional purine biosynthesis protein PurH.